The primary structure comprises 990 residues: Chondroitin sulfate ABC exolyase (990 aa).

H453 acts as the Proton acceptor in catalysis. Y460 functions as the Proton donor in the catalytic mechanism.

Belongs to the polysaccharide lyase 8 family.

The enzyme catalyses Exolytic removal of Delta(4)-unsaturated disaccharide residues from the non-reducing ends of both polymeric chondroitin/dermatan sulfates and their oligosaccharide fragments.. Its activity is regulated as follows. Inhibited by Zn(2+), whereas Ni(2+), Fe(2+), and Cu(2+) have little or no effect on activity. In terms of biological role, broad-specificity glycosaminoglycan lyase, which acts in an exolytic fashion, and preferentially degrades the tetra- and hexasaccharide derivatives of chondroitin sulfate and dermatan sulfate produced by the chondroitin sulfate ABC endolyase, to yield the respective disaccharides. To a lesser extent, is also able to split off disaccharide residues directly from polymeric chondroitin 4- and 6-sulfate, dermatan sulfate, chondroitin, and hyaluronan. Is not active against keratan sulfate, heparan sulfate, and heparin. The sequence is that of Chondroitin sulfate ABC exolyase (ChABCII) from Proteus vulgaris.